Consider the following 396-residue polypeptide: 1-deoxy-D-xylulose 5-phosphate reductoisomerase (396 aa).

NADPH is bound by residues threonine 17, glycine 18, serine 19, isoleucine 20, asparagine 47, and asparagine 130. A 1-deoxy-D-xylulose 5-phosphate-binding site is contributed by lysine 131. Glutamate 132 serves as a coordination point for NADPH. Aspartate 156 serves as a coordination point for Mn(2+). 1-deoxy-D-xylulose 5-phosphate contacts are provided by serine 157, glutamate 158, serine 182, and histidine 205. Glutamate 158 lines the Mn(2+) pocket. Glycine 211 serves as a coordination point for NADPH. Residues serine 218, asparagine 223, lysine 224, and glutamate 227 each contribute to the 1-deoxy-D-xylulose 5-phosphate site. Glutamate 227 provides a ligand contact to Mn(2+).

It belongs to the DXR family. The cofactor is Mg(2+). It depends on Mn(2+) as a cofactor.

The catalysed reaction is 2-C-methyl-D-erythritol 4-phosphate + NADP(+) = 1-deoxy-D-xylulose 5-phosphate + NADPH + H(+). It functions in the pathway isoprenoid biosynthesis; isopentenyl diphosphate biosynthesis via DXP pathway; isopentenyl diphosphate from 1-deoxy-D-xylulose 5-phosphate: step 1/6. Its function is as follows. Catalyzes the NADPH-dependent rearrangement and reduction of 1-deoxy-D-xylulose-5-phosphate (DXP) to 2-C-methyl-D-erythritol 4-phosphate (MEP). This is 1-deoxy-D-xylulose 5-phosphate reductoisomerase from Rhizobium etli (strain CIAT 652).